Consider the following 408-residue polypeptide: Elongation factor Tu, chloroplastic (408 aa).

In terms of domain architecture, tr-type G spans Lys10–Glu213. A G1 region spans residues Gly19–Thr26. Gly19–Thr26 is a binding site for GTP. Thr26 is a Mg(2+) binding site. Residues Gly59–Asn63 form a G2 region. The segment at Asp80–Gly83 is G3. GTP contacts are provided by residues Asp80–His84 and Asn135–Asp138. The segment at Asn135–Asp138 is G4. Residues Ser173–Leu175 form a G5 region.

The protein belongs to the TRAFAC class translation factor GTPase superfamily. Classic translation factor GTPase family. EF-Tu/EF-1A subfamily.

It localises to the plastid. Its subcellular location is the chloroplast. The catalysed reaction is GTP + H2O = GDP + phosphate + H(+). In terms of biological role, GTP hydrolase that promotes the GTP-dependent binding of aminoacyl-tRNA to the A-site of ribosomes during protein biosynthesis. In Guillardia theta (Cryptophyte), this protein is Elongation factor Tu, chloroplastic (tufA).